A 172-amino-acid chain; its full sequence is Adenine phosphoribosyltransferase (172 aa).

This sequence belongs to the purine/pyrimidine phosphoribosyltransferase family. Homodimer.

It localises to the cytoplasm. It catalyses the reaction AMP + diphosphate = 5-phospho-alpha-D-ribose 1-diphosphate + adenine. It functions in the pathway purine metabolism; AMP biosynthesis via salvage pathway; AMP from adenine: step 1/1. In terms of biological role, catalyzes a salvage reaction resulting in the formation of AMP, that is energically less costly than de novo synthesis. This chain is Adenine phosphoribosyltransferase, found in Staphylococcus haemolyticus (strain JCSC1435).